The primary structure comprises 1025 residues: Multidrug resistance protein MdtC (1025 aa).

The next 12 membrane-spanning stretches (helical) occupy residues 3–23, 333–353, 360–380, 387–407, 431–451, 463–483, 528–548, 853–873, 875–895, 897–917, 953–973, and 984–1004; these read FFALFIYRPVATILLSVAITL, EVEQTLIISVALVILVVFLFL, IIPAVSVPVSLIGTFAAMYLC, LSLMALTIATGFVVDDAIVVL, VGFTVLSMSLSLVAVFLPLLL, FAVTLSVAIGISLLVSLTLTP, LVGVVLLGTIALNIWLYISIP, VILIIAAIATVYIVLGILYES, VHPLTILSTLPSAGVGALLAL, LFNAPFSLIALIGIMLLIGIV, PIMMTTLAALFGALPLVLSGG, and ITIVGGLVMSQLLTLYTTPVV.

Belongs to the resistance-nodulation-cell division (RND) (TC 2.A.6) family. MdtC subfamily. Part of a tripartite efflux system composed of MdtA, MdtB and MdtC. MdtC forms a heteromultimer with MdtB.

It is found in the cell inner membrane. The MdtABC tripartite complex confers resistance against novobiocin and deoxycholate. The protein is Multidrug resistance protein MdtC of Escherichia coli (strain K12 / MC4100 / BW2952).